We begin with the raw amino-acid sequence, 627 residues long: DNA topoisomerase 4 subunit B (627 aa).

Residues tyrosine 4, asparagine 41, aspartate 68, 109-115, and lysine 333 each bind ATP; that span reads GLHGVGV. One can recognise a Toprim domain in the interval 412–525; sequence TELFIVEGDS…NGHIYIAQPP (114 aa). Mg(2+) is bound by residues glutamate 418, aspartate 490, and aspartate 492.

The protein belongs to the type II topoisomerase family. ParE type 1 subfamily. Heterotetramer composed of ParC and ParE. It depends on Mg(2+) as a cofactor. Mn(2+) serves as cofactor. Requires Ca(2+) as cofactor.

The enzyme catalyses ATP-dependent breakage, passage and rejoining of double-stranded DNA.. With respect to regulation, pyrrolopyrimidines inhibit both GyrB and its paralog in topoisomerase IV (parE). In terms of biological role, topoisomerase IV is essential for chromosome segregation. It relaxes supercoiled DNA. Performs the decatenation events required during the replication of a circular DNA molecule. The protein is DNA topoisomerase 4 subunit B of Francisella tularensis subsp. holarctica (strain LVS).